A 331-amino-acid chain; its full sequence is Peroxidase 69 (331 aa).

A signal peptide spans 1–23 (MGRGYNLLFVLVTFLVLVAAVTA). Intrachain disulfides connect Cys-46-Cys-122, Cys-79-Cys-84, Cys-128-Cys-327, and Cys-205-Cys-237. His-77 functions as the Proton acceptor in the catalytic mechanism. The Ca(2+) site is built by Asp-78, Val-81, Gly-83, Asp-85, and Ser-87. N-linked (GlcNAc...) asparagine glycosylation is present at Asn-93. Pro-168 is a binding site for substrate. Position 198 (His-198) interacts with heme b. Thr-199 is a Ca(2+) binding site. N-linked (GlcNAc...) asparagine glycosylation is present at Asn-216. 3 residues coordinate Ca(2+): Asp-248, Ser-251, and Asp-256.

Belongs to the peroxidase family. Classical plant (class III) peroxidase subfamily. The cofactor is heme b. It depends on Ca(2+) as a cofactor. As to expression, mainly expressed in roots and slightly in leaves.

Its subcellular location is the secreted. The catalysed reaction is 2 a phenolic donor + H2O2 = 2 a phenolic radical donor + 2 H2O. Functionally, removal of H(2)O(2), oxidation of toxic reductants, biosynthesis and degradation of lignin, suberization, auxin catabolism, response to environmental stresses such as wounding, pathogen attack and oxidative stress. These functions might be dependent on each isozyme/isoform in each plant tissue. This chain is Peroxidase 69 (PER69), found in Arabidopsis thaliana (Mouse-ear cress).